Reading from the N-terminus, the 216-residue chain is FMN-dependent NADH:quinone oxidoreductase (216 aa).

Residues Ser-10 and 15–17 contribute to the FMN site; that span reads SIS.

This sequence belongs to the azoreductase type 1 family. Homodimer. Requires FMN as cofactor.

The catalysed reaction is 2 a quinone + NADH + H(+) = 2 a 1,4-benzosemiquinone + NAD(+). It carries out the reaction N,N-dimethyl-1,4-phenylenediamine + anthranilate + 2 NAD(+) = 2-(4-dimethylaminophenyl)diazenylbenzoate + 2 NADH + 2 H(+). Its function is as follows. Quinone reductase that provides resistance to thiol-specific stress caused by electrophilic quinones. Functionally, also exhibits azoreductase activity. Catalyzes the reductive cleavage of the azo bond in aromatic azo compounds to the corresponding amines. The chain is FMN-dependent NADH:quinone oxidoreductase from Nocardia farcinica (strain IFM 10152).